Here is an 876-residue protein sequence, read N- to C-terminus: AP-5 complex subunit beta-1 (876 aa).

Probably part of the adaptor protein complex 5 (AP-5), a tetramer composed of AP5B1, AP5M1, AP5S1 and AP5Z1. Interacts with ZFYVE26 and SPG11.

Its function is as follows. As part of AP-5, a probable fifth adaptor protein complex, it may be involved in endosomal transport. The sequence is that of AP-5 complex subunit beta-1 (Ap5b1) from Rattus norvegicus (Rat).